Consider the following 132-residue polypeptide: MAITYSIGDMLTKLRNASRVGHGSVDLKMSNMNKSILNILKEEGYIKDFNFLEKKGIAFIRVLLKYDNKRNPVINKIDAISTPGRKIYSSYRNMPRIKNGYGILIISSSQGVITGKEAKDKKIGGELICSVW.

Belongs to the universal ribosomal protein uS8 family. As to quaternary structure, part of the 30S ribosomal subunit. Contacts proteins S5 and S12.

Functionally, one of the primary rRNA binding proteins, it binds directly to 16S rRNA central domain where it helps coordinate assembly of the platform of the 30S subunit. The protein is Small ribosomal subunit protein uS8 of Borreliella burgdorferi (strain ZS7) (Borrelia burgdorferi).